Reading from the N-terminus, the 392-residue chain is Gastricsin (392 aa).

The first 16 residues, 1–16 (MKWMVVALLCLPLLEA), serve as a signal peptide directing secretion. Residues 17–62 (ALIRVPLKKMKSIRETMKEQGVLKDFLKNHKYDPGQKYHFGKFGDY) constitute a propeptide, activation peptide. The Peptidase A1 domain occupies 76-389 (YYGEISIGTP…DMGNNRVGLA (314 aa)). Residue D94 is part of the active site. Intrachain disulfides connect C107/C112 and C270/C275. D280 is an active-site residue. A disulfide bond links C314 and C347.

The protein belongs to the peptidase A1 family.

The protein resides in the secreted. The enzyme catalyses More restricted specificity than pepsin A, but shows preferential cleavage at Tyr-|-Xaa bonds. High activity on hemoglobin.. Its function is as follows. Hydrolyzes a variety of proteins. The sequence is that of Gastricsin (Pgc) from Mus musculus (Mouse).